The sequence spans 117 residues: uncharacterized protein (117 aa).

Positions 1–22 (MHVKYLAGIVGAALLMAGCSSS) are cleaved as a signal peptide.

This is an uncharacterized protein from Escherichia coli O6:H1 (strain CFT073 / ATCC 700928 / UPEC).